The primary structure comprises 377 residues: Transcription factor ast-1 (377 aa).

The segment at 72–143 (PNRMLYNDNT…SNGSSSSTES (72 aa)) is disordered. 2 stretches are compositionally biased toward low complexity: residues 96–109 (STSA…TSSK) and 118–142 (TESS…SSTE). A DNA-binding region (ETS) is located at residues 214 to 294 (TQLWQFLLEL…HGKRYAYKFD (81 aa)).

This sequence belongs to the ETS family. In terms of tissue distribution, expressed in the A-neurons in the male-specific genital sensilla (simple sense organs) known as rays.

Its subcellular location is the nucleus. The protein resides in the cell projection. It is found in the neuron projection. Its function is as follows. Transcription factor. Probably binds to DNA sequences containing the consensus motif 5'-CGGA[AT][AG]-3'. Positively modulates expression of dopamine pathway genes, acting as a terminal selector for differentiation of dopaminergic neurons; may act in concert with homeobox proteins ceh-40, ceh-43 and ceh-20. Required for axon navigation in some interneurons, perhaps acting in the same pathways as basement membrane protein nid-1 and unc-6/netrin. Plays a role in the differentiation of the ventral cord pioneer neuron AVG. Required for morphogenesis of the pharynx. The polypeptide is Transcription factor ast-1 (Caenorhabditis elegans).